We begin with the raw amino-acid sequence, 549 residues long: MSEHVLPAEGPMRFISPIIQDNPTGWGPYEMPDQFRDMPYQPFSKGDRLGKISDWTMVQDKKYQNKYASQFGAGSSYAYFHDEDESTFHLVDTTRVQKPYQSYQRGRARGQRGRGARGARTPGGMTTLNKPRERKLGKRWGQRGAPMKIRDASVTVRPTWVTIEDMDFPRLAKLSLPGIKEGEDIVSCGTLEYYDKAYDRVNVKHEKPLQRIDRIFHTVTTTDDPVIRRLSKTAGTVYATDAILATIMCCTRSNYSWDIVIEKIGDKLFLHKRDNTEFDLLTVNETSVEPPADDGNSINSPRNLALEATFINHNFSQQVLKSGPTEPKYKFQEPNPFVSEQEDGEVASVGYRYRKWILNNGVVLIARCEHDAVMQGPQGETQFLTIKALNEWDSKLANGVEWRQKLDTQRGAVLANELRNNSCKLAKWTVQALLAGSDQIKFGYVSRAQVRDNSRHVILGTQQFKPHEFAAQINLSMDNAWGILRCIIDICMKQKDGKYLIMKDPNKPLIRLYDIPDNTFESDASEESGDEQADTPFAPLYSYGNSKRV.

A disordered region spans residues 101–130 (QSYQRGRARGQRGRGARGARTPGGMTTLNK). A compositionally biased stretch (basic residues) spans 106-117 (GRARGQRGRGAR). The segment at 277–291 (EFDLLTVNETSVEPP) is RNA gate. Residues 521-549 (ESDASEESGDEQADTPFAPLYSYGNSKRV) form a disordered region. A compositionally biased stretch (acidic residues) spans 523-533 (DASEESGDEQA).

Belongs to the eIF-3 subunit D family. Component of the eukaryotic translation initiation factor 3 (eIF-3) complex.

The protein resides in the cytoplasm. Functionally, mRNA cap-binding component of the eukaryotic translation initiation factor 3 (eIF-3) complex, which is involved in protein synthesis of a specialized repertoire of mRNAs and, together with other initiation factors, stimulates binding of mRNA and methionyl-tRNAi to the 40S ribosome. The eIF-3 complex specifically targets and initiates translation of a subset of mRNAs involved in cell proliferation. In the eIF-3 complex, eif3d specifically recognizes and binds the 7-methylguanosine cap of a subset of mRNAs. The sequence is that of Eukaryotic translation initiation factor 3 subunit D from Bombyx mori (Silk moth).